A 67-amino-acid polypeptide reads, in one-letter code: Large ribosomal subunit protein uL29 (67 aa).

This sequence belongs to the universal ribosomal protein uL29 family.

This is Large ribosomal subunit protein uL29 from Alkaliphilus oremlandii (strain OhILAs) (Clostridium oremlandii (strain OhILAs)).